Reading from the N-terminus, the 508-residue chain is MWELVALLLLTLAYLFWPKRRCPGAKYPKSLLSLPLVGSLPFLPRHGHMHNNFFKLQKKYGPIYSVRMGTKTTVIVGHHQLAKEVLIKKGKDFSGRPQMATLDIASNNRKGIAFADSGAHWQLHRRLAMATFALFKDGDQKLEKIICQEISTLCDMLATHNGQSIDISFPVFVAVTNVISLICFNTSYKNGDPELNIIQNYNEGIIDNLSKDSLVDLVPWLKIFPNKTLEKLKSHVKIRNDLLNKILENYKEKFRSDSITNMLDTLMQAKMNSDNGNAGPDQDSELLSDNHILTTIGDIFGAGVETTTSVVKWTLAFLLHNPQVKKKLYEEIDQNVGFSRTPTISDRNRLLLLEATIREVLRLRPVAPMLIPHKANVDSSIGEFAVDKGTQVIINLWALHHNEKEWHQPDQFMPERFLNPAGTQLISPSVSYLPFGAGPRSCIGEILARQELFLIMAWLLQRFDLEVPDDGQLPSLEGIPKVVFLIDSFKVKIKVRQAWREAQAEGST.

Residue asparagine 202 coordinates substrate. Cysteine 442 lines the heme pocket.

Belongs to the cytochrome P450 family. The cofactor is heme.

It localises to the endoplasmic reticulum membrane. Its subcellular location is the microsome membrane. The catalysed reaction is a C21-steroid + reduced [NADPH--hemoprotein reductase] + O2 = a 17alpha-hydroxy-C21-steroid + oxidized [NADPH--hemoprotein reductase] + H2O + H(+). It catalyses the reaction progesterone + reduced [NADPH--hemoprotein reductase] + O2 = 17alpha-hydroxyprogesterone + oxidized [NADPH--hemoprotein reductase] + H2O + H(+). The enzyme catalyses pregnenolone + reduced [NADPH--hemoprotein reductase] + O2 = 17alpha-hydroxypregnenolone + oxidized [NADPH--hemoprotein reductase] + H2O + H(+). It carries out the reaction 17alpha-hydroxyprogesterone + reduced [NADPH--hemoprotein reductase] + O2 = androst-4-ene-3,17-dione + acetate + oxidized [NADPH--hemoprotein reductase] + H2O + 2 H(+). The catalysed reaction is 17alpha-hydroxyprogesterone + reduced [NADPH--hemoprotein reductase] + O2 = 16alpha,17alpha-dihydroxyprogesterone + oxidized [NADPH--hemoprotein reductase] + H2O + H(+). It catalyses the reaction 16alpha,17alpha-dihydroxyprogesterone + reduced [NADPH--hemoprotein reductase] + O2 = 6beta,16alpha,17alpha-trihydroxyprogesterone + oxidized [NADPH--hemoprotein reductase] + H2O + H(+). The enzyme catalyses 17alpha-hydroxypregnenolone + reduced [NADPH--hemoprotein reductase] + O2 = 3beta-hydroxyandrost-5-en-17-one + acetate + oxidized [NADPH--hemoprotein reductase] + H2O + 2 H(+). It carries out the reaction 16alpha,17alpha-dihydroxypregnenolone + reduced [NADPH--hemoprotein reductase] + O2 = 3beta,16alpha-dihydroxy-androst-5-en-17-one + acetate + oxidized [NADPH--hemoprotein reductase] + H2O + 2 H(+). The catalysed reaction is 3beta-hydroxyandrost-5-en-17-one + reduced [NADPH--hemoprotein reductase] + O2 = 3beta,16alpha-dihydroxy-androst-5-en-17-one + oxidized [NADPH--hemoprotein reductase] + H2O + H(+). It catalyses the reaction androst-4-ene-3,17-dione + reduced [NADPH--hemoprotein reductase] + O2 = 16alpha-hydroxyandrost-4-ene-3,17-dione + oxidized [NADPH--hemoprotein reductase] + H2O + H(+). It functions in the pathway steroid hormone biosynthesis. Its pathway is steroid biosynthesis; glucocorticoid biosynthesis. With respect to regulation, regulated predominantly by intracellular cAMP levels. The 17,20-lyase activity is stimulated by cytochrome b5, which acts as an allosteric effector increasing the Vmax of the lyase activity. A cytochrome P450 monooxygenase involved in corticoid and androgen biosynthesis. Catalyzes 17-alpha hydroxylation of C21 steroids, which is common for both pathways. A second oxidative step, required only for androgen synthesis, involves an acyl-carbon cleavage. The 17-alpha hydroxy intermediates, as part of adrenal glucocorticoids biosynthesis pathway, are precursors of cortisol. Hydroxylates steroid hormones, pregnenolone and progesterone to form 17-alpha hydroxy metabolites, followed by the cleavage of the C17-C20 bond to form C19 steroids, dehydroepiandrosterone (DHEA) and androstenedione. Has 16-alpha hydroxylase activity. Catalyzes 16-alpha hydroxylation of 17-alpha hydroxy pregnenolone, followed by the cleavage of the C17-C20 bond to form 16-alpha-hydroxy DHEA. Also 16-alpha hydroxylates androgens, relevant for estriol synthesis. Mechanistically, uses molecular oxygen inserting one oxygen atom into a substrate, and reducing the second into a water molecule, with two electrons provided by NADPH via cytochrome P450 reductase (CPR; NADPH-ferrihemoprotein reductase). The polypeptide is Steroid 17-alpha-hydroxylase/17,20 lyase (CYP17A1) (Pan troglodytes (Chimpanzee)).